The following is a 366-amino-acid chain: Aminomethyltransferase (366 aa).

This sequence belongs to the GcvT family. As to quaternary structure, the glycine cleavage system is composed of four proteins: P, T, L and H.

It catalyses the reaction N(6)-[(R)-S(8)-aminomethyldihydrolipoyl]-L-lysyl-[protein] + (6S)-5,6,7,8-tetrahydrofolate = N(6)-[(R)-dihydrolipoyl]-L-lysyl-[protein] + (6R)-5,10-methylene-5,6,7,8-tetrahydrofolate + NH4(+). In terms of biological role, the glycine cleavage system catalyzes the degradation of glycine. This is Aminomethyltransferase from Bordetella parapertussis (strain 12822 / ATCC BAA-587 / NCTC 13253).